The following is a 508-amino-acid chain: Light-independent protochlorophyllide reductase subunit B (508 aa).

Asp36 serves as a coordination point for [4Fe-4S] cluster. The active-site Proton donor is Asp294. Residue 429–430 (GM) coordinates substrate.

This sequence belongs to the ChlB/BchB/BchZ family. As to quaternary structure, protochlorophyllide reductase is composed of three subunits; ChlL, ChlN and ChlB. Forms a heterotetramer of two ChlB and two ChlN subunits. [4Fe-4S] cluster is required as a cofactor.

It carries out the reaction chlorophyllide a + oxidized 2[4Fe-4S]-[ferredoxin] + 2 ADP + 2 phosphate = protochlorophyllide a + reduced 2[4Fe-4S]-[ferredoxin] + 2 ATP + 2 H2O. The protein operates within porphyrin-containing compound metabolism; chlorophyll biosynthesis (light-independent). Functionally, component of the dark-operative protochlorophyllide reductase (DPOR) that uses Mg-ATP and reduced ferredoxin to reduce ring D of protochlorophyllide (Pchlide) to form chlorophyllide a (Chlide). This reaction is light-independent. The NB-protein (ChlN-ChlB) is the catalytic component of the complex. The protein is Light-independent protochlorophyllide reductase subunit B of Rippkaea orientalis (strain PCC 8801 / RF-1) (Cyanothece sp. (strain PCC 8801)).